We begin with the raw amino-acid sequence, 367 residues long: MKNVGFIGWRGMVGSVLMQRMVEERDFDAIRPVFFSTSQLGQAAPSFGGTTGTLQDAFDLEALKALDIIVTCQGGDYTNEIYPKLRESGWQGYWIDAASSLRMKDDAIIILDPVNQDVITDGLNNGIRTFVGGNCTVSLMLMSLGGLFANDLVDWVSVATYQAASGGGARHMRELLTQMGHLYGHVADELATPSSAILDIERKVTTLTRSGELPVDNFGVPLAGSLIPWIDKQLDNGQSREEWKGQAETNKILNTSSVIPVDGLCVRVGALRCHSQAFTIKLKKDVSIPTVEELLAAHNPWAKVVPNDREITMRELTPAAVTGTLTTPVGRLRKLNMGPEFLSAFTVGDQLLWGAAEPLRRMLRQLA.

NADP(+) contacts are provided by residues 10–13 (RGMV), 37–38 (TS), and glutamine 73. Arginine 102 is a phosphate binding site. The active-site Acyl-thioester intermediate is the cysteine 135. The residue at position 135 (cysteine 135) is an S-cysteinyl cysteine; in inhibited form. Residue glutamine 162 participates in substrate binding. Residues 165–169 (SGGGA), arginine 173, and proline 193 each bind NADP(+). Position 241 (glutamate 241) interacts with substrate. Phosphate is bound at residue lysine 244. Arginine 267 serves as a coordination point for substrate. Residue histidine 274 is the Proton acceptor of the active site. Glutamine 350 serves as a coordination point for NADP(+).

This sequence belongs to the aspartate-semialdehyde dehydrogenase family. As to quaternary structure, homodimer.

It catalyses the reaction L-aspartate 4-semialdehyde + phosphate + NADP(+) = 4-phospho-L-aspartate + NADPH + H(+). The protein operates within amino-acid biosynthesis; L-lysine biosynthesis via DAP pathway; (S)-tetrahydrodipicolinate from L-aspartate: step 2/4. Its pathway is amino-acid biosynthesis; L-methionine biosynthesis via de novo pathway; L-homoserine from L-aspartate: step 2/3. It participates in amino-acid biosynthesis; L-threonine biosynthesis; L-threonine from L-aspartate: step 2/5. Its activity is regulated as follows. Is inhibited by L- and D-cystine, and by other cystine derivatives, via the formation of a covalently bound cysteine at the active site Cys-135. Functionally, catalyzes the NADPH-dependent formation of L-aspartate-semialdehyde (L-ASA) by the reductive dephosphorylation of L-aspartyl-4-phosphate. This is Aspartate-semialdehyde dehydrogenase from Escherichia coli (strain K12).